The chain runs to 313 residues: 4-hydroxy-3-methylbut-2-enyl diphosphate reductase (313 aa).

C12 provides a ligand contact to [4Fe-4S] cluster. Residues H41 and H74 each contribute to the (2E)-4-hydroxy-3-methylbut-2-enyl diphosphate site. Dimethylallyl diphosphate is bound by residues H41 and H74. Positions 41 and 74 each coordinate isopentenyl diphosphate. C96 contacts [4Fe-4S] cluster. H124 serves as a coordination point for (2E)-4-hydroxy-3-methylbut-2-enyl diphosphate. H124 serves as a coordination point for dimethylallyl diphosphate. An isopentenyl diphosphate-binding site is contributed by H124. E126 functions as the Proton donor in the catalytic mechanism. Residue T167 participates in (2E)-4-hydroxy-3-methylbut-2-enyl diphosphate binding. C197 lines the [4Fe-4S] cluster pocket. The (2E)-4-hydroxy-3-methylbut-2-enyl diphosphate site is built by S225, S226, N227, and S269. Dimethylallyl diphosphate is bound by residues S225, S226, N227, and S269. Isopentenyl diphosphate contacts are provided by S225, S226, N227, and S269.

This sequence belongs to the IspH family. [4Fe-4S] cluster serves as cofactor.

The catalysed reaction is isopentenyl diphosphate + 2 oxidized [2Fe-2S]-[ferredoxin] + H2O = (2E)-4-hydroxy-3-methylbut-2-enyl diphosphate + 2 reduced [2Fe-2S]-[ferredoxin] + 2 H(+). The enzyme catalyses dimethylallyl diphosphate + 2 oxidized [2Fe-2S]-[ferredoxin] + H2O = (2E)-4-hydroxy-3-methylbut-2-enyl diphosphate + 2 reduced [2Fe-2S]-[ferredoxin] + 2 H(+). The protein operates within isoprenoid biosynthesis; dimethylallyl diphosphate biosynthesis; dimethylallyl diphosphate from (2E)-4-hydroxy-3-methylbutenyl diphosphate: step 1/1. It functions in the pathway isoprenoid biosynthesis; isopentenyl diphosphate biosynthesis via DXP pathway; isopentenyl diphosphate from 1-deoxy-D-xylulose 5-phosphate: step 6/6. Catalyzes the conversion of 1-hydroxy-2-methyl-2-(E)-butenyl 4-diphosphate (HMBPP) into a mixture of isopentenyl diphosphate (IPP) and dimethylallyl diphosphate (DMAPP). Acts in the terminal step of the DOXP/MEP pathway for isoprenoid precursor biosynthesis. In Methylococcus capsulatus (strain ATCC 33009 / NCIMB 11132 / Bath), this protein is 4-hydroxy-3-methylbut-2-enyl diphosphate reductase.